Here is a 249-residue protein sequence, read N- to C-terminus: ATP synthase subunit a (249 aa).

The next 6 helical transmembrane spans lie at 30 to 50 (QSPL…YVGM), 86 to 106 (FFPF…LGLL), 115 to 135 (HIAV…LASI), 146 to 166 (FLPA…EIIS), 191 to 211 (VFAG…VLAI), and 218 to 238 (IALT…FAIL).

Belongs to the ATPase A chain family. As to quaternary structure, F-type ATPases have 2 components, CF(1) - the catalytic core - and CF(0) - the membrane proton channel. CF(1) has five subunits: alpha(3), beta(3), gamma(1), delta(1), epsilon(1). CF(0) has three main subunits: a(1), b(2) and c(9-12). The alpha and beta chains form an alternating ring which encloses part of the gamma chain. CF(1) is attached to CF(0) by a central stalk formed by the gamma and epsilon chains, while a peripheral stalk is formed by the delta and b chains.

The protein resides in the cell inner membrane. Functionally, key component of the proton channel; it plays a direct role in the translocation of protons across the membrane. In Gluconobacter oxydans (strain 621H) (Gluconobacter suboxydans), this protein is ATP synthase subunit a.